The chain runs to 167 residues: Phospholipase A and acyltransferase 1 (167 aa).

Residues 1–138 lie on the Cytoplasmic side of the membrane; sequence MAVNDCFSLT…GEGVSEQANR (138 aa). An LRAT domain is found at 20–135; that stretch reads LIEVFRPCYQ…LRYGEGVSEQ (116 aa). The active site involves His-30. Cys-119 functions as the Acyl-thioester intermediate in the catalytic mechanism. Residues 139-159 traverse the membrane as a helical segment; that stretch reads AIGTIGLVAAGIDIFTFLGLF. At 160-167 the chain is on the lumenal side; that stretch reads PKRQRTKY.

The protein belongs to the H-rev107 family. As to expression, expressed in skeletal muscle, heart, brain, bone marrow and testis. In terms of tissue distribution, abundantly expressed in brain, heart, and skeletal muscle.

It localises to the membrane. It is found in the cytoplasm. The protein resides in the nucleus. The enzyme catalyses a 1,2-diacyl-sn-glycero-3-phosphocholine + H2O = a 1-acyl-sn-glycero-3-phosphocholine + a fatty acid + H(+). The catalysed reaction is a 1,2-diacyl-sn-glycero-3-phosphocholine + H2O = a 2-acyl-sn-glycero-3-phosphocholine + a fatty acid + H(+). It catalyses the reaction 1,2-dihexadecanoyl-sn-glycero-3-phosphocholine + H2O = 2-hexadecanoyl-sn-glycero-3-phosphocholine + hexadecanoate + H(+). It carries out the reaction 1,2-dihexadecanoyl-sn-glycero-3-phosphocholine + H2O = 1-hexadecanoyl-sn-glycero-3-phosphocholine + hexadecanoate + H(+). The enzyme catalyses 1-hexadecanoyl-2-(5Z,8Z,11Z,14Z-eicosatetraenoyl)-sn-glycero-3-phosphoethanolamine + H2O = 2-(5Z,8Z,11Z,14Z)-eicosatetraenoyl-sn-glycero-3-phosphoethanolamine + hexadecanoate + H(+). The catalysed reaction is 1-hexadecanoyl-2-(5Z,8Z,11Z,14Z-eicosatetraenoyl)-sn-glycero-3-phosphoethanolamine + H2O = 1-hexadecanoyl-sn-glycero-3-phosphoethanolamine + (5Z,8Z,11Z,14Z)-eicosatetraenoate + H(+). It catalyses the reaction 1,2-di-(9Z-octadecenoyl)-sn-glycero-3-phosphoethanolamine + 1,2-dihexadecanoyl-sn-glycero-3-phosphocholine = hexadecanoyl-sn-glycero-3-phosphocholine + N-hexadecanoyl-1,2-di-(9Z-octadecenoyl)-sn-glycero-3-phosphoethanolamine + H(+). It carries out the reaction 1,2-dihexadecanoyl-sn-glycero-3-phosphocholine + a 2-acyl-sn-glycero-3-phosphocholine = a 1-hexadecanoyl-2-acyl-sn-glycero-3-phosphocholine + 2-hexadecanoyl-sn-glycero-3-phosphocholine. Functionally, exhibits both phospholipase A1/2 and acyltransferase activities. Shows phospholipase A1 (PLA1) and A2 (PLA2) activity, catalyzing the calcium-independent release of fatty acids from the sn-1 or sn-2 position of glycerophospholipids. Shows O-acyltransferase activity, catalyzing the transfer of a fatty acyl group from glycerophospholipid to the hydroxyl group of lysophospholipid. Shows N-acyltransferase activity, catalyzing the calcium-independent transfer of a fatty acyl group at the sn-1 position of phosphatidylcholine (PC) and other glycerophospholipids to the primary amine of phosphatidylethanolamine (PE), forming N-acylphosphatidylethanolamine (NAPE), which serves as precursor for N-acylethanolamines (NAEs). This is Phospholipase A and acyltransferase 1 from Mus musculus (Mouse).